Reading from the N-terminus, the 465-residue chain is MSVELNDLGRVHFIGIGGAGMSGIVRIMLARGISVSGSDAKESAGLLELGALGASVHAGHAAQNVAGADTVVISTAIRANNPELEFARTQGLRVLHRSEALAAAMAQDTVVAVAGTHGKTTTTAMIAVLLREAGLDPSFAVGGTVPALGVNAAHGAGGIFVAEADESDGSFLNYRPQIAVVTNAEPDHLDHYGTAEAVMEAFQSFIGLIPADGLLVACTDDDGALALAKQAAARGTRVVTYGRSAAAEVWLINDGAHRAIEFITPIGPQRLVLELQVPGEHNALNALAAFAVALELGVEAEQALSALAGFTGAARRFEFKGQVRGIRVFDDYAHHPTEVRAALTAARTVADGHHVLVLFQPHLFSRTHEFAAEFAAALSLADSIMVLDVYPAREDPIPGVTGELITEANAKLTFQPDRAKAIQELVARTANGDIVLTVGAGDVTEAGAAILDALATPAQEVSHGG.

ATP is bound at residue 115–121 (GTHGKTT).

This sequence belongs to the MurCDEF family.

Its subcellular location is the cytoplasm. The catalysed reaction is UDP-N-acetyl-alpha-D-muramate + L-alanine + ATP = UDP-N-acetyl-alpha-D-muramoyl-L-alanine + ADP + phosphate + H(+). It functions in the pathway cell wall biogenesis; peptidoglycan biosynthesis. Functionally, cell wall formation. The polypeptide is UDP-N-acetylmuramate--L-alanine ligase (Renibacterium salmoninarum (strain ATCC 33209 / DSM 20767 / JCM 11484 / NBRC 15589 / NCIMB 2235)).